A 469-amino-acid chain; its full sequence is UDP-N-acetylmuramate--L-alanine ligase (469 aa).

Glycine 122–threonine 128 is an ATP binding site.

It belongs to the MurCDEF family.

It is found in the cytoplasm. The enzyme catalyses UDP-N-acetyl-alpha-D-muramate + L-alanine + ATP = UDP-N-acetyl-alpha-D-muramoyl-L-alanine + ADP + phosphate + H(+). Its pathway is cell wall biogenesis; peptidoglycan biosynthesis. Its function is as follows. Cell wall formation. The chain is UDP-N-acetylmuramate--L-alanine ligase from Legionella pneumophila (strain Paris).